The sequence spans 526 residues: Peptide chain release factor 3 (526 aa).

One can recognise a tr-type G domain in the interval 9 to 277 (DKRRTFAIIS…GIVEWAPKPL (269 aa)). Residues 18-25 (SHPDAGKT), 86-90 (DTPGH), and 140-143 (NKLD) each bind GTP.

This sequence belongs to the TRAFAC class translation factor GTPase superfamily. Classic translation factor GTPase family. PrfC subfamily.

Its subcellular location is the cytoplasm. In terms of biological role, increases the formation of ribosomal termination complexes and stimulates activities of RF-1 and RF-2. It binds guanine nucleotides and has strong preference for UGA stop codons. It may interact directly with the ribosome. The stimulation of RF-1 and RF-2 is significantly reduced by GTP and GDP, but not by GMP. This is Peptide chain release factor 3 from Shewanella sp. (strain ANA-3).